The sequence spans 90 residues: Putative defensin-like protein 168 (90 aa).

An N-terminal signal peptide occupies residues 1–27 (MKYFTLFMISYIFISIFVFSHIHDVEA). Disulfide bonds link C32/C90, C43/C66, C51/C84, and C64/C86.

The protein belongs to the DEFL family.

It is found in the secreted. This chain is Putative defensin-like protein 168, found in Arabidopsis thaliana (Mouse-ear cress).